The sequence spans 377 residues: Lactosylceramide 1,3-N-acetyl-beta-D-glucosaminyltransferase B (377 aa).

At 1-13 (MLISARRLRRCQS) the chain is on the cytoplasmic side. Residues 14–30 (LQLLASCFVLSLMALLV) traverse the membrane as a helical; Signal-anchor for type II membrane protein segment. The Lumenal segment spans residues 31 to 377 (QEDNSLVNHV…DTYPCSAAWS (347 aa)). N56, N167, and N275 each carry an N-linked (GlcNAc...) asparagine glycan.

This sequence belongs to the glycosyltransferase 31 family.

It localises to the golgi apparatus membrane. It catalyses the reaction a beta-D-Gal-(1-&gt;4)-beta-D-Glc-(1&lt;-&gt;1)-Cer(d18:1(4E)) + UDP-N-acetyl-alpha-D-glucosamine = a beta-D-GlcNAc-(1-&gt;3)-beta-D-Gal-(1-&gt;4)-beta-D-Glc-(1&lt;-&gt;1)-Cer(d18:1(4E)) + UDP + H(+). The enzyme catalyses a neolactoside nLc4Cer(d18:1(4E)) + UDP-N-acetyl-alpha-D-glucosamine = a neolactoside IV(3)-beta-GlcNAc-nLc4Cer(d18:1(4E)) + UDP + H(+). Its pathway is protein modification; protein glycosylation. Its function is as follows. Beta-1,3-N-acetylglucosaminyltransferase that plays a key role in the synthesis of lacto- or neolacto-series carbohydrate chains on glycolipids. The chain is Lactosylceramide 1,3-N-acetyl-beta-D-glucosaminyltransferase B (b3gnt5-b) from Xenopus laevis (African clawed frog).